Consider the following 685-residue polypeptide: DNA ligase (685 aa).

Residues 47 to 51 (DSEYD), 96 to 97 (SL), and E125 contribute to the NAD(+) site. K127 functions as the N6-AMP-lysine intermediate in the catalytic mechanism. NAD(+) contacts are provided by R148, E185, K304, and K328. The Zn(2+) site is built by C422, C425, C440, and C446. Positions 605 to 685 (ADAQPLKGQT…ALLALFAANR (81 aa)) constitute a BRCT domain.

Belongs to the NAD-dependent DNA ligase family. LigA subfamily. Mg(2+) is required as a cofactor. It depends on Mn(2+) as a cofactor.

The catalysed reaction is NAD(+) + (deoxyribonucleotide)n-3'-hydroxyl + 5'-phospho-(deoxyribonucleotide)m = (deoxyribonucleotide)n+m + AMP + beta-nicotinamide D-nucleotide.. Its function is as follows. DNA ligase that catalyzes the formation of phosphodiester linkages between 5'-phosphoryl and 3'-hydroxyl groups in double-stranded DNA using NAD as a coenzyme and as the energy source for the reaction. It is essential for DNA replication and repair of damaged DNA. This Shewanella putrefaciens (strain CN-32 / ATCC BAA-453) protein is DNA ligase.